A 166-amino-acid polypeptide reads, in one-letter code: Small ribosomal subunit protein uS5 (166 aa).

Residues Q10 to V73 form the S5 DRBM domain.

It belongs to the universal ribosomal protein uS5 family. As to quaternary structure, part of the 30S ribosomal subunit. Contacts proteins S4 and S8.

Its function is as follows. With S4 and S12 plays an important role in translational accuracy. In terms of biological role, located at the back of the 30S subunit body where it stabilizes the conformation of the head with respect to the body. This Borrelia garinii subsp. bavariensis (strain ATCC BAA-2496 / DSM 23469 / PBi) (Borreliella bavariensis) protein is Small ribosomal subunit protein uS5.